The primary structure comprises 309 residues: Carbonic anhydrase 4 (309 aa).

The N-terminal stretch at 1–17 (MQLLLALLALAYVAPST) is a signal peptide. Positions 20 to 282 (SHWCYEIQAK…LGNRQVFRSH (263 aa)) constitute an Alpha-carbonic anhydrase domain. Cystine bridges form between cysteine 23–cysteine 35 and cysteine 45–cysteine 226. Histidine 87 (proton donor/acceptor) is an active-site residue. Zn(2+) contacts are provided by histidine 114, histidine 116, and histidine 139. Residue asparagine 193 is glycosylated (N-linked (GlcNAc...) asparagine). 222-223 (TT) serves as a coordination point for substrate. Serine 281 carries the GPI-anchor amidated serine lipid modification. A propeptide spans 282-309 (HASGRLLSLPLPTLLVPTLTCLVASFLH) (removed in mature form).

Belongs to the alpha-carbonic anhydrase family. Interacts with SLC4A4. The cofactor is Zn(2+). In terms of processing, the N-terminus is blocked. Post-translationally, glycosylated. In terms of tissue distribution, present in kidney and lung. Also particularly abundant in brain, muscle, heart and liver. Not detected in skin or spleen.

It is found in the cell membrane. It catalyses the reaction hydrogencarbonate + H(+) = CO2 + H2O. Its activity is regulated as follows. Inhibited by acetazolamide. Catalyzes the reversible hydration of carbon dioxide into bicarbonate and protons and thus is essential to maintaining intracellular and extracellular pH. May stimulate the sodium/bicarbonate transporter activity of SLC4A4 that acts in pH homeostasis. It is essential for acid overload removal from the retina and retina epithelium, and acid release in the choriocapillaris in the choroid. The sequence is that of Carbonic anhydrase 4 (Ca4) from Rattus norvegicus (Rat).